A 519-amino-acid chain; its full sequence is Protein nucleotidyltransferase YdiU (519 aa).

Positions 100, 102, 103, 123, 135, 136, 193, and 200 each coordinate ATP. Asp270 (proton acceptor) is an active-site residue. Mg(2+)-binding residues include Asn271 and Asp280. Asp280 contacts ATP.

The protein belongs to the SELO family. Mg(2+) is required as a cofactor. It depends on Mn(2+) as a cofactor.

It catalyses the reaction L-seryl-[protein] + ATP = 3-O-(5'-adenylyl)-L-seryl-[protein] + diphosphate. The enzyme catalyses L-threonyl-[protein] + ATP = 3-O-(5'-adenylyl)-L-threonyl-[protein] + diphosphate. The catalysed reaction is L-tyrosyl-[protein] + ATP = O-(5'-adenylyl)-L-tyrosyl-[protein] + diphosphate. It carries out the reaction L-histidyl-[protein] + UTP = N(tele)-(5'-uridylyl)-L-histidyl-[protein] + diphosphate. It catalyses the reaction L-seryl-[protein] + UTP = O-(5'-uridylyl)-L-seryl-[protein] + diphosphate. The enzyme catalyses L-tyrosyl-[protein] + UTP = O-(5'-uridylyl)-L-tyrosyl-[protein] + diphosphate. Nucleotidyltransferase involved in the post-translational modification of proteins. It can catalyze the addition of adenosine monophosphate (AMP) or uridine monophosphate (UMP) to a protein, resulting in modifications known as AMPylation and UMPylation. The sequence is that of Protein nucleotidyltransferase YdiU from Xylella fastidiosa (strain 9a5c).